The primary structure comprises 247 residues: Cobalt transport protein CbiM (247 aa).

The signal sequence occupies residues 1–21 (MVGWGVLILLMVLWLPRQAYA). 7 helical membrane passes run 27 to 47 (GYLP…ALIL), 64 to 84 (LVLA…LPSV), 96 to 116 (LGAV…ILLF), 119 to 139 (LLLA…MAVV), 159 to 179 (GVAV…TTSL), 181 to 201 (LALA…KFAS), and 202 to 222 (IFAV…VIMV).

This sequence belongs to the CbiM family. Forms an energy-coupling factor (ECF) transporter complex composed of an ATP-binding protein (A component, CbiO), a transmembrane protein (T component, CbiQ) and 2 possible substrate-capture proteins (S components, CbiM and CbiN) of unknown stoichimetry.

The protein resides in the cell membrane. It functions in the pathway cofactor biosynthesis; adenosylcobalamin biosynthesis. Its function is as follows. Part of the energy-coupling factor (ECF) transporter complex CbiMNOQ involved in cobalt import. In Kyrpidia tusciae (strain DSM 2912 / NBRC 15312 / T2) (Bacillus tusciae), this protein is Cobalt transport protein CbiM.